A 514-amino-acid chain; its full sequence is MNAPDLTRPPLTIRRISLDTGRENVAVISRRSRALRPEVFRGFSRVELRINSKVLLATLMITDDDAMIGPDEVGLSEPAFRRFNEPVGSAVSVTPARSPASLDAVRAKIQGHTLSAAEITAIVDDLAHFRYSDMEIAAFLISAARFTTTDELLALVGAMASVGTKLTWDTPIVVDKHCIGGIPGNRTTMIVVPIVAAHGLMIPKTSSRAITSPAGTADTMELLARVDLDVEQMKQVVHACGGCLVWGGHVNLSPADDILISVERPLSLDTPEQMVASIMSKKLAAGSTRLLIDFPVGPSAKVTNANEAMRLRKLFEFVGDHFGISVEVVTTDGRQPIGRGIGPVLEARDVMAVLGNEPGAPADLREKSLRLAAHLLEYDPKLRGGTGYARAKELLDSGAALKKMQQIIDAQGPSPCPAELGSYAADVLAAADGVVNGIDCLRINRLARSAGAPVAKGAGIDLFKKIGDRVEKGEPLYRVYASDRSEFDLALAAAQAESGFAINHHTPADVDLVS.

Belongs to the thymidine/pyrimidine-nucleoside phosphorylase family. Type 2 subfamily.

The enzyme catalyses thymidine + phosphate = 2-deoxy-alpha-D-ribose 1-phosphate + thymine. The chain is Putative thymidine phosphorylase from Rhodopseudomonas palustris (strain ATCC BAA-98 / CGA009).